Reading from the N-terminus, the 442-residue chain is Putative mannan endo-1,6-alpha-mannosidase C970.02 (442 aa).

Residues Met1 to Ala19 form the signal peptide. Asn25, Asn82, Asn107, Asn131, Asn201, Asn236, Asn261, Asn264, Asn277, and Asn361 each carry an N-linked (GlcNAc...) asparagine glycan.

Belongs to the glycosyl hydrolase 76 family.

It carries out the reaction Random hydrolysis of (1-&gt;6)-alpha-D-mannosidic linkages in unbranched (1-&gt;6)-mannans.. The protein is Putative mannan endo-1,6-alpha-mannosidase C970.02 of Schizosaccharomyces pombe (strain 972 / ATCC 24843) (Fission yeast).